The following is a 181-amino-acid chain: Adenine phosphoribosyltransferase (181 aa).

The protein belongs to the purine/pyrimidine phosphoribosyltransferase family. In terms of assembly, homodimer.

The protein resides in the cytoplasm. The catalysed reaction is AMP + diphosphate = 5-phospho-alpha-D-ribose 1-diphosphate + adenine. It participates in purine metabolism; AMP biosynthesis via salvage pathway; AMP from adenine: step 1/1. Its function is as follows. Catalyzes a salvage reaction resulting in the formation of AMP, that is energically less costly than de novo synthesis. The protein is Adenine phosphoribosyltransferase (Aprt) of Drosophila pseudoobscura pseudoobscura (Fruit fly).